Reading from the N-terminus, the 415-residue chain is Hepatocyte nuclear factor 3-beta (415 aa).

The fork-head DNA-binding region spans lysine 150–lysine 244. Residues lysine 251–glycine 262 are compositionally biased toward basic and acidic residues. The interval lysine 251 to serine 324 is disordered. A compositionally biased stretch (low complexity) spans serine 266 to asparagine 277. The span at serine 310–histidine 323 shows a compositional bias: polar residues.

The protein localises to the nucleus. Transcription activator for a number of liver genes. Interacts with the cis-acting regulatory regions of these genes. This Oryzias latipes (Japanese rice fish) protein is Hepatocyte nuclear factor 3-beta (foxa2).